The chain runs to 907 residues: Glutamate receptor 1 (907 aa).

Positions 1 to 18 (MPYIFAFFCTGFLGAVVG) are cleaved as a signal peptide. Topologically, residues 19 to 536 (ANFPNNIQIG…GVFSFLDPLA (518 aa)) are extracellular. 6 N-linked (GlcNAc...) asparagine glycosylation sites follow: Asn-63, Asn-249, Asn-257, Asn-363, Asn-401, and Asn-406. Cys-75 and Cys-323 are oxidised to a cystine. L-glutamate-binding residues include Pro-492, Thr-494, and Arg-499. Residues 537 to 557 (YEIWMCIVFAYIGVSVVLFLV) form a helical membrane-spanning segment. The Cytoplasmic portion of the chain corresponds to 558 to 584 (SRFSPYEWHSEEFEEGRDQTTSDQSNE). Positions 585–600 (FGIFNSLWFSLGAFMQ) form an intramembrane region, helical; Pore-forming. The stretch at 601–603 (QGC) is an intramembrane region. Residue Cys-603 is the site of S-palmitoyl cysteine attachment. Over 604 to 609 (DISPRS) the chain is Cytoplasmic. A helical membrane pass occupies residues 610-630 (LSGRIVGGVWWFFTLIIISSY). Residues 631 to 805 (TANLAAFLTV…DKTSALSLSN (175 aa)) lie on the Extracellular side of the membrane. Ser-645 bears the Phosphoserine mark. L-glutamate is bound by residues Ser-668 and Thr-669. Ser-710 carries the post-translational modification Phosphoserine; by PKC. Glu-719 is an L-glutamate binding site. The cysteines at positions 732 and 787 are disulfide-linked. Residues 806 to 826 (VAGVFYILIGGLGLAMLVALI) traverse the membrane as a helical segment. Residues 827 to 907 (EFCYKSRSES…SGMPLGATGL (81 aa)) are Cytoplasmic-facing. Cys-829 carries the S-palmitoyl cysteine lipid modification. Ser-849 bears the Phosphoserine; by PKC, PKA and CAMK2 mark. The disordered stretch occupies residues 857-881 (STLPRNSGAGASGGGGSGENGRVVS). Ser-863 carries the post-translational modification Phosphoserine; by PKC, PKA and PKG/PRKG2. The segment covering 866-875 (GASGGGGSGE) has biased composition (gly residues). Residues 904-907 (ATGL) carry the PDZ-binding motif.

This sequence belongs to the glutamate-gated ion channel (TC 1.A.10.1) family. GRIA1 subfamily. Homotetramer or heterotetramer of pore-forming glutamate receptor subunits; heteromeric assembly can be the result of both receptor subtype and flip-flop forms and according the composition, one partner can be dominant with respect to the fast desensitizing current component, whereas the other can determine the steady-state component. Tetramers may be formed by the dimerization of dimers. Found in a complex with GRIA2, GRIA3, GRIA4, CNIH2, CNIH3, CACNG2, CACNG3, CACNG4, CACNG5, CACNG7 and CACNG8. Interacts with HIP1 and RASGRF2. Interacts with SYNDIG1 and GRIA2. Interacts with DLG1 (via C-terminus). Interacts with LRFN1. Interacts with PRKG2. Interacts with CNIH2 and CACNG2. Interacts with CACNG5; this interaction modulates the gating. Interacts (via C-terminus) with PDLIM4 (via LIM domain); this interaction as well as the interaction of PDLIM4 with alpha-actinin is required for their colocalization in early endosomes. Interacts with SNX27 (via PDZ domain); the interaction is required for recycling to the plasma membrane when endocytosed and prevent degradation in lysosomes. Interacts (via PDZ-binding motif) with SHANK3 (via PDZ domain). Interacts with CACNG3; associates GRIA1 with the adapter protein complex 4 (AP-4) to target GRIA1 to the somatodendritic compartment of neurons. Interacts with CACNG2; this interaction mediates traffick to the plasma membrane and modulation of desensitization. Interaction with CNIH2 and CNIH3; this interaction promotes expression at the plasma membrane and extensively modulates their gating properties by slowing deactivation and desensitization kinetics. Found in a complex with GRIA2, GRIA3, GRIA4, DLG4, CACNG8 and CNIH2. In terms of processing, phosphorylated at Ser-645. Phosphorylated at Ser-710 by PKC. Phosphorylated at Ser-849 by PKC, PKA and CAMK2. Phosphorylated at Ser-863 by PKC, PKA and PRKG2. Phosphorylation of Ser-863 is reduced by induction of long-term depression and increased by induction of long-term potentiation. Post-translationally, palmitoylated. Depalmitoylated by CPT1C and upon L-glutamate stimulation. ZDHHC3/GODZ specifically palmitoylates Cys-603, which leads to Golgi retention and decreased cell surface expression. In contrast, Cys-829 palmitoylation does not affect cell surface expression but regulates stimulation-dependent endocytosis. As to expression, detected in cerebellum (at protein level).

The protein localises to the cell membrane. The protein resides in the endoplasmic reticulum membrane. Its subcellular location is the postsynaptic cell membrane. It localises to the postsynaptic density membrane. It is found in the cell projection. The protein localises to the dendrite. The protein resides in the dendritic spine. Its subcellular location is the early endosome membrane. It localises to the recycling endosome membrane. It is found in the presynapse. The protein localises to the synapse. It carries out the reaction Ca(2+)(in) = Ca(2+)(out). It catalyses the reaction Na(+)(in) = Na(+)(out). The enzyme catalyses Mg(2+)(in) = Mg(2+)(out). The catalysed reaction is Li(+)(in) = Li(+)(out). It carries out the reaction K(+)(in) = K(+)(out). It catalyses the reaction Sr(2+)(in) = Sr(2+)(out). With respect to regulation, glutamate-gated receptor activity inhibited by DNQX (6,7-dinitroquinoxaline-2,3-dione). Ionotropic glutamate receptor that functions as a ligand-gated cation channel, gated by L-glutamate and glutamatergic agonists such as alpha-amino-3-hydroxy-5-methyl-4-isoxazolepropionic acid (AMPA), quisqualic acid, and kainic acid. L-glutamate acts as an excitatory neurotransmitter at many synapses in the central nervous system. Binding of the excitatory neurotransmitter L-glutamate induces a conformation change, leading to the opening of the cation channel, and thereby converts the chemical signal to an electrical impulse upon entry of monovalent and divalent cations such as sodium and calcium. The receptor then desensitizes rapidly and enters in a transient inactive state, characterized by the presence of bound agonist. In the presence of CACNG2 or CACNG4 or CACNG7 or CACNG8, shows resensitization which is characterized by a delayed accumulation of current flux upon continued application of L-glutamate. Resensitization is blocked by CNIH2 through interaction with CACNG8 in the CACNG8-containing AMPA receptors complex. Calcium (Ca(2+)) permeability depends on subunits composition and, heteromeric channels containing edited GRIA2 subunit are calcium-impermeable. Also permeable to other divalents cations such as strontium(2+) and magnesium(2+) and monovalent cations such as potassium(1+) and lithium(1+). This chain is Glutamate receptor 1, found in Rattus norvegicus (Rat).